A 272-amino-acid polypeptide reads, in one-letter code: Ribonuclease HII (272 aa).

In terms of domain architecture, RNase H type-2 spans 87–272 (KYVAGVDEVG…HRMSFLKNIL (186 aa)). Asp-93, Glu-94, and Asp-188 together coordinate a divalent metal cation.

The protein belongs to the RNase HII family. Requires Mn(2+) as cofactor. Mg(2+) is required as a cofactor.

It is found in the cytoplasm. The enzyme catalyses Endonucleolytic cleavage to 5'-phosphomonoester.. Its function is as follows. Endonuclease that specifically degrades the RNA of RNA-DNA hybrids. The sequence is that of Ribonuclease HII from Clostridium perfringens (strain SM101 / Type A).